Here is a 507-residue protein sequence, read N- to C-terminus: Glycine, alanine and asparagine-rich protein (507 aa).

An N-terminal signal peptide occupies residues 1–17 (MLRVPLLVLCLALSVGA). Residues 158–185 (SAQALASATAELQAAQDAYDQASAYAEA) adopt a coiled-coil conformation. Residues 462 to 498 (GNGNGGNGRNGNGGNGRNGNGGNGGNGNGRNGRGGRY) show a composition bias toward gly residues. Residues 462-507 (GNGNGGNGRNGNGGNGRNGNGGNGGNGNGRNGRGGRYYYGSSDYYY) form a disordered region.

As to expression, component of the acid-soluble and acid-insoluble organic matrix of calcified shell layers (at protein level).

It localises to the secreted. The protein is Glycine, alanine and asparagine-rich protein of Haliotis asinina (Donkey's ear abalone).